A 1214-amino-acid chain; its full sequence is Delta-latroinsectotoxin-Lt1a (1214 aa).

Residues 64 to 89 (IGSIPVIGEVVGIVTAPIAIVSHITS) form a helix H2 is the probable transmembrane region of the tetrameric pore inserted in the target cell membrane region. The interval 250–269 (ALYALFYGTQTYAAVMFFLL) is helix H8 is the probable transmembrane region of the tetrameric pore inserted in the target cell membrane. ANK repeat units lie at residues 464-497 (DIHR…DIEA), 501-532 (NDRS…DIEL), 536-565 (NGFT…DVNA), 570-600 (TNLT…KVNE), 604-633 (DGFT…DKNA), 637-666 (SGLT…DLNI), 670-699 (NHMA…KVSI), 706-734 (NNWT…DINL), 740-769 (GNLT…NIEE), 773-802 (EGYT…DIEA), 806-835 (DNLT…DIGA), 839-868 (DGST…NLKE), 872-901 (NKYL…SLKD), 906-936 (EGRT…TLDE), and 966-994 (VKPT…PEGS). The propeptide at 1020-1214 (IVKETNSRYL…IDVHQKMFLR (195 aa)) is C-terminal domain cleavage is required for toxin activation.

Belongs to the cationic peptide 01 (latrotoxin) family. 04 (delta-latroinsectotoxin) subfamily. Homotetramer in membrane. In terms of tissue distribution, expressed by the venom gland.

The protein localises to the secreted. Its subcellular location is the target cell membrane. In terms of biological role, insecticidal presynaptic neurotoxin that induces massive neurotransmitter release at insect (but not vertebrate) neuromuscular junctions. Native toxin forms cation-permeable pores (with high permeability to calcium) in lipid membranes locust muscle membrane and artificial lipid bilayers. May bind to insect neurexin-1 homolog, insect adhesion G protein-coupled receptor L1 homolog, and insect receptor-type tyrosine-protein phosphatase S homolog, and induces neurotransmitter exocytosis both by forming tetrameric pores in membranes and signaling via G protein-coupled receptor. Oligomerization is a process independent of divalent cations. This Latrodectus tredecimguttatus (Mediterranean black widow spider) protein is Delta-latroinsectotoxin-Lt1a.